The primary structure comprises 458 residues: Glutamyl-tRNA reductase (458 aa).

Residues 49 to 52 (TCNR), S111, 116 to 118 (ETE), and Q122 each bind substrate. The Nucleophile role is filled by C50. An NADP(+)-binding site is contributed by 191 to 196 (GAGKMS). 2 stretches are compositionally biased toward basic and acidic residues: residues 426–440 (IPKD…KEVE) and 448–458 (ERGHHESDFHN). The disordered stretch occupies residues 426–458 (IPKDGEEHSSSKEVESVTQSSTERGHHESDFHN).

This sequence belongs to the glutamyl-tRNA reductase family. Homodimer.

The catalysed reaction is (S)-4-amino-5-oxopentanoate + tRNA(Glu) + NADP(+) = L-glutamyl-tRNA(Glu) + NADPH + H(+). The protein operates within porphyrin-containing compound metabolism; protoporphyrin-IX biosynthesis; 5-aminolevulinate from L-glutamyl-tRNA(Glu): step 1/2. Catalyzes the NADPH-dependent reduction of glutamyl-tRNA(Glu) to glutamate 1-semialdehyde (GSA). The polypeptide is Glutamyl-tRNA reductase (Natranaerobius thermophilus (strain ATCC BAA-1301 / DSM 18059 / JW/NM-WN-LF)).